We begin with the raw amino-acid sequence, 966 residues long: Integrator complex subunit 7 (966 aa).

Residues serine 338 and serine 809 each carry the phosphoserine modification. Residues 941-966 (LQQQAQQPLQPQPLPQPQPRSAYTRF) form a disordered region.

Belongs to the Integrator subunit 7 family. As to quaternary structure, component of the Integrator complex, composed of core subunits INTS1, INTS2, INTS3, INTS4, INTS5, INTS6, INTS7, INTS8, INTS9/RC74, INTS10, INTS11/CPSF3L, INTS12, INTS13, INTS14 and INTS15. The core complex associates with protein phosphatase 2A subunits PPP2CA and PPP2R1A, to form the Integrator-PP2A (INTAC) complex. Interacts with NABP2.

It is found in the nucleus. The protein resides in the chromosome. It localises to the cytoplasm. Component of the integrator complex, a multiprotein complex that terminates RNA polymerase II (Pol II) transcription in the promoter-proximal region of genes. The integrator complex provides a quality checkpoint during transcription elongation by driving premature transcription termination of transcripts that are unfavorably configured for transcriptional elongation: the complex terminates transcription by (1) catalyzing dephosphorylation of the C-terminal domain (CTD) of Pol II subunit POLR2A/RPB1 and SUPT5H/SPT5, (2) degrading the exiting nascent RNA transcript via endonuclease activity and (3) promoting the release of Pol II from bound DNA. The integrator complex is also involved in terminating the synthesis of non-coding Pol II transcripts, such as enhancer RNAs (eRNAs), small nuclear RNAs (snRNAs), telomerase RNAs and long non-coding RNAs (lncRNAs). May be not involved in the recruitment of cytoplasmic dynein to the nuclear envelope by different components of the INT complex. Plays a role in DNA damage response (DDR) signaling during the S phase. The chain is Integrator complex subunit 7 (Ints7) from Mus musculus (Mouse).